The chain runs to 131 residues: Large-conductance mechanosensitive channel (131 aa).

The next 2 membrane-spanning stretches (helical) occupy residues 14–34 (VIDLAVGVIIGGAFGKIVTSL) and 67–87 (GSFIQTVIDFLIISFSIFIFI).

The protein belongs to the MscL family. Homopentamer.

Its subcellular location is the cell membrane. Its function is as follows. Channel that opens in response to stretch forces in the membrane lipid bilayer. May participate in the regulation of osmotic pressure changes within the cell. The chain is Large-conductance mechanosensitive channel from Bacillus pumilus (strain SAFR-032).